A 208-amino-acid polypeptide reads, in one-letter code: Uracil phosphoribosyltransferase (208 aa).

5-phospho-alpha-D-ribose 1-diphosphate-binding positions include R78, R103, and 130–138 (DPMLATANS). Uracil contacts are provided by residues I193 and 198–200 (GDA). D199 contributes to the 5-phospho-alpha-D-ribose 1-diphosphate binding site.

This sequence belongs to the UPRTase family. The cofactor is Mg(2+).

It catalyses the reaction UMP + diphosphate = 5-phospho-alpha-D-ribose 1-diphosphate + uracil. It functions in the pathway pyrimidine metabolism; UMP biosynthesis via salvage pathway; UMP from uracil: step 1/1. With respect to regulation, allosterically activated by GTP. Its function is as follows. Catalyzes the conversion of uracil and 5-phospho-alpha-D-ribose 1-diphosphate (PRPP) to UMP and diphosphate. In Brucella canis (strain ATCC 23365 / NCTC 10854 / RM-666), this protein is Uracil phosphoribosyltransferase.